The following is a 31-amino-acid chain: Unknown protein from spot 104 of 2D-PAGE of thylakoid (31 aa).

It localises to the plastid. Its subcellular location is the chloroplast thylakoid. The protein is Unknown protein from spot 104 of 2D-PAGE of thylakoid of Pisum sativum (Garden pea).